The chain runs to 350 residues: Cobalt-precorrin-5B C(1)-methyltransferase (350 aa).

The protein belongs to the CbiD family.

The catalysed reaction is Co-precorrin-5B + S-adenosyl-L-methionine = Co-precorrin-6A + S-adenosyl-L-homocysteine. It participates in cofactor biosynthesis; adenosylcobalamin biosynthesis; cob(II)yrinate a,c-diamide from sirohydrochlorin (anaerobic route): step 6/10. Its function is as follows. Catalyzes the methylation of C-1 in cobalt-precorrin-5B to form cobalt-precorrin-6A. This Syntrophotalea carbinolica (strain DSM 2380 / NBRC 103641 / GraBd1) (Pelobacter carbinolicus) protein is Cobalt-precorrin-5B C(1)-methyltransferase.